The chain runs to 553 residues: CTP synthase (553 aa).

The tract at residues 1–277 is amidoligase domain; sequence MPTEPETDYD…DQYVMEELDI (277 aa). A CTP-binding site is contributed by S26. S26 contributes to the UTP binding site. ATP is bound by residues 27–32 and D84; that span reads GLGKGI. The Mg(2+) site is built by D84 and E152. CTP contacts are provided by residues 159–161, 198–203, and K234; these read DIE and KTKPTQ. Residues 198-203 and K234 contribute to the UTP site; that span reads KTKPTQ. The Glutamine amidotransferase type-1 domain maps to 307–544; that stretch reads LVGKYDLEDA…LEAVLGDDPH (238 aa). G364 contacts L-glutamine. Catalysis depends on C391, which acts as the Nucleophile; for glutamine hydrolysis. L-glutamine is bound by residues 392–395, E415, and R472; that span reads LGFQ. Residues H517 and E519 contribute to the active site.

Belongs to the CTP synthase family. Homotetramer.

It catalyses the reaction UTP + L-glutamine + ATP + H2O = CTP + L-glutamate + ADP + phosphate + 2 H(+). The enzyme catalyses L-glutamine + H2O = L-glutamate + NH4(+). It carries out the reaction UTP + NH4(+) + ATP = CTP + ADP + phosphate + 2 H(+). The protein operates within pyrimidine metabolism; CTP biosynthesis via de novo pathway; CTP from UDP: step 2/2. Allosterically activated by GTP, when glutamine is the substrate; GTP has no effect on the reaction when ammonia is the substrate. The allosteric effector GTP functions by stabilizing the protein conformation that binds the tetrahedral intermediate(s) formed during glutamine hydrolysis. Inhibited by the product CTP, via allosteric rather than competitive inhibition. Its function is as follows. Catalyzes the ATP-dependent amination of UTP to CTP with either L-glutamine or ammonia as the source of nitrogen. Regulates intracellular CTP levels through interactions with the four ribonucleotide triphosphates. The sequence is that of CTP synthase from Haloarcula marismortui (strain ATCC 43049 / DSM 3752 / JCM 8966 / VKM B-1809) (Halobacterium marismortui).